We begin with the raw amino-acid sequence, 93 residues long: MKTLVLLSALVLLAFQVQADPIQNTDEETKTEEQPGEEDQAVSVSFGDPEGTSLQEESLRDLVCYCRKRGCKRREHMNGTCRRGHLMYTLCCR.

Residues 1-19 (MKTLVLLSALVLLAFQVQA) form the signal peptide. Residues 20–58 (DPIQNTDEETKTEEQPGEEDQAVSVSFGDPEGTSLQEES) constitute a propeptide that is removed on maturation. The segment at 22-54 (IQNTDEETKTEEQPGEEDQAVSVSFGDPEGTSL) is disordered. 3 disulfides stabilise this stretch: Cys-64-Cys-92, Cys-66-Cys-81, and Cys-71-Cys-91.

The protein belongs to the alpha-defensin family. In terms of tissue distribution, paneth cells of the small bowel.

The protein localises to the secreted. Probably contributes to the antimicrobial barrier function of the small bowel mucosa. The polypeptide is Alpha-defensin 13 (Defa13) (Mus musculus (Mouse)).